A 466-amino-acid chain; its full sequence is Cytochrome c-552 (466 aa).

Positions 1 to 27 (MVRNLTKKSFALSALVAASLMASGVMA) are cleaved as a signal peptide. Histidine 87 is a binding site for heme c. Residues cysteine 115, cysteine 118, and lysine 119 each coordinate heme. Positions 153, 156, 157, 195, 198, and 199 each coordinate heme c. Ca(2+) contacts are provided by glutamate 201, tyrosine 202, lysine 250, and glutamine 252. A substrate-binding site is contributed by tyrosine 202. Residue histidine 253 participates in substrate binding. Residues histidine 264, cysteine 271, cysteine 274, histidine 275, histidine 290, cysteine 303, cysteine 306, histidine 307, and histidine 382 each contribute to the heme c site.

This sequence belongs to the cytochrome c-552 family. Ca(2+) is required as a cofactor. Heme c serves as cofactor.

The protein localises to the periplasm. It catalyses the reaction 6 Fe(III)-[cytochrome c] + NH4(+) + 2 H2O = 6 Fe(II)-[cytochrome c] + nitrite + 8 H(+). It functions in the pathway nitrogen metabolism; nitrate reduction (assimilation). In terms of biological role, catalyzes the reduction of nitrite to ammonia, consuming six electrons in the process. The polypeptide is Cytochrome c-552 (Shewanella sediminis (strain HAW-EB3)).